The following is a 427-amino-acid chain: Glutamate-1-semialdehyde 2,1-aminomutase (427 aa).

An N6-(pyridoxal phosphate)lysine modification is found at Lys-265.

It belongs to the class-III pyridoxal-phosphate-dependent aminotransferase family. HemL subfamily. As to quaternary structure, homodimer. It depends on pyridoxal 5'-phosphate as a cofactor.

It localises to the cytoplasm. The catalysed reaction is (S)-4-amino-5-oxopentanoate = 5-aminolevulinate. It functions in the pathway porphyrin-containing compound metabolism; protoporphyrin-IX biosynthesis; 5-aminolevulinate from L-glutamyl-tRNA(Glu): step 2/2. The sequence is that of Glutamate-1-semialdehyde 2,1-aminomutase from Pseudomonas putida (strain ATCC 700007 / DSM 6899 / JCM 31910 / BCRC 17059 / LMG 24140 / F1).